The sequence spans 977 residues: Phosphatidylinositol 4-kinase PIK1alpha (977 aa).

The PIK helical domain occupies 1–125; sequence MSADITETPN…QAVRNLITKI (125 aa). The disordered stretch occupies residues 205 to 261; the sequence is MSADIPKGSHSDDETATSSSIKPSLSRSASVPRRNTKKTSLSFSSDESEAYTTDDDD. A compositionally biased stretch (polar residues) spans 220–233; the sequence is ATSSSIKPSLSRSA. Positions 250-261 are enriched in acidic residues; sequence DESEAYTTDDDD. The PI3K/PI4K catalytic domain occupies 679–960; the sequence is EDWNTKKQRI…FLIGKSLGSM (282 aa). The G-loop stretch occupies residues 685–691; sequence KQRIKKS. Residues 826–834 form a catalytic loop region; the sequence is QIKDRHNGN. An activation loop region spans residues 845 to 869; it reads HIDFGFLLSNSPGSVGFEAAPFKLT.

The protein belongs to the PI3/PI4-kinase family. Type III PI4K subfamily.

The protein resides in the nucleus. It catalyses the reaction a 1,2-diacyl-sn-glycero-3-phospho-(1D-myo-inositol) + ATP = a 1,2-diacyl-sn-glycero-3-phospho-(1D-myo-inositol 4-phosphate) + ADP + H(+). Functionally, acts on phosphatidylinositol (PI) in the first committed step in the production of the second messenger inositol 1,4,5,-trisphosphate. The chain is Phosphatidylinositol 4-kinase PIK1alpha (PIKALPHA) from Candida albicans (strain SC5314 / ATCC MYA-2876) (Yeast).